We begin with the raw amino-acid sequence, 375 residues long: Chaperone protein DnaJ (375 aa).

Residues 4–68 (DYYEILGVSR…ETRARYDRFG (65 aa)) enclose the J domain. The CR-type zinc finger occupies 134-216 (GGEKEIRIRH…CGGSGRKQET (83 aa)). The Zn(2+) site is built by C147, C150, C164, C167, C190, C193, C204, and C207. CXXCXGXG motif repeat units lie at residues 147-154 (CQVCEGSG), 164-171 (CSTCSGSG), 190-197 (CPTCNGSG), and 204-211 (CEACGGSG).

Belongs to the DnaJ family. Homodimer. Requires Zn(2+) as cofactor.

Its subcellular location is the cytoplasm. Participates actively in the response to hyperosmotic and heat shock by preventing the aggregation of stress-denatured proteins and by disaggregating proteins, also in an autonomous, DnaK-independent fashion. Unfolded proteins bind initially to DnaJ; upon interaction with the DnaJ-bound protein, DnaK hydrolyzes its bound ATP, resulting in the formation of a stable complex. GrpE releases ADP from DnaK; ATP binding to DnaK triggers the release of the substrate protein, thus completing the reaction cycle. Several rounds of ATP-dependent interactions between DnaJ, DnaK and GrpE are required for fully efficient folding. Also involved, together with DnaK and GrpE, in the DNA replication of plasmids through activation of initiation proteins. The chain is Chaperone protein DnaJ from Gloeothece citriformis (strain PCC 7424) (Cyanothece sp. (strain PCC 7424)).